We begin with the raw amino-acid sequence, 59 residues long: Small ribosomal subunit protein bS21 (59 aa).

The interval 39–59 (ETPVEKYKRKQRLKNRTKRRR) is disordered. Over residues 45–59 (YKRKQRLKNRTKRRR) the composition is skewed to basic residues.

It belongs to the bacterial ribosomal protein bS21 family.

In Prochlorococcus marinus (strain SARG / CCMP1375 / SS120), this protein is Small ribosomal subunit protein bS21.